A 545-amino-acid chain; its full sequence is Autoimmune regulator (545 aa).

One can recognise an HSR domain in the interval 1 to 105 (MATDAALRRL…ILDSFPKDVD (105 aa)). Short sequence motifs (LXXLL motif) lie at residues 7–11 (LRRLL) and 63–67 (LSWLL). Disordered stretches follow at residues 101–178 (PKDV…LPLG) and 234–290 (SKFE…SDPQ). Pro residues predominate over residues 116 to 128 (PAVPKALVPPPRL). The segment covering 140-152 (AAAPAALTPRGTA) has biased composition (low complexity). The SAND domain maps to 181-280 (IQTMSASVQR…ARLGQQGSVP (100 aa)). Interaction with histone H3 not methylated at 'Lys-4' stretches follow at residues 295–298 (NEDE), 304–312 (DGGELICCD), and 331–335 (PSGTW). The segment at 296–343 (EDECAVCRDGGELICCDGCPRAFHLACLSPPLREIPSGTWRCSSCLQA) adopts a PHD-type 1 zinc-finger fold. The interval 348–382 (VQPRAEEPRPQEPPVETPLPPGLRSAGEEVRGPPG) is disordered. The span at 358–368 (QEPPVETPLPP) shows a compositional bias: pro residues. An LXXLL motif 3 motif is present at residues 414-418 (LHPLL). The PHD-type 2 zinc-finger motif lies at 434–475 (CGVCGDGTDVLRCTHCAAAFHWRCHFPAGTSRPGTGLRCRSC). Residues 489 to 508 (APSPARLAPGPAKDDTASHE) form a disordered region. Positions 516 to 520 (LESLL) match the LXXLL motif 4 motif.

As to quaternary structure, homodimer and homotetramer. Interacts with CREBBP. Interacts preferentially with histone H3 that is not methylated at 'Lys-4'. Binds with lower affinity to histone H3 that is monomethylated at 'Lys-4'. Trimethylation of histone H3 at 'Lys-4' or phosphorylation at 'Thr-3' abolish the interaction. Binds with lower affinity to histone H3 that is acetylated at 'Lys-4', or that is acetylated at 'Lys-9' or trimethylated at 'Lys-9'. Binds histone H3 that is dimethylated at 'Arg-2' with very low affinity. Post-translationally, phosphorylated. Phosphorylation could trigger oligomerization. Widely expressed. Expressed at higher level in thymus (medullary epithelial cells and monocyte-dendritic cells), pancreas, adrenal cortex and testis. Expressed at lower level in the spleen, fetal liver and lymph nodes. In secondary lymphoid organs, expressed in a discrete population of bone marrow-derived toleregenic antigen presenting cells (APCs) called extrathymic AIRE expressing cells (eTAC)(at protein level). Isoform 2 and isoform 3 seem to be less frequently expressed than isoform 1, if at all.

The protein localises to the nucleus. It localises to the cytoplasm. Functionally, transcription factor playing an essential role to promote self-tolerance in the thymus by regulating the expression of a wide array of self-antigens that have the commonality of being tissue-restricted in their expression pattern in the periphery, called tissue restricted antigens (TRA). Binds to G-doublets in an A/T-rich environment; the preferred motif is a tandem repeat of 5'-ATTGGTTA-3' combined with a 5'-TTATTA-3' box. Binds to nucleosomes. Binds to chromatin and interacts selectively with histone H3 that is not methylated at 'Lys-4', not phosphorylated at 'Thr-3' and not methylated at 'Arg-2'. Functions as a sensor of histone H3 modifications that are important for the epigenetic regulation of gene expression. Mainly expressed by medullary thymic epithelial cells (mTECs), induces the expression of thousands of tissue-restricted proteins, which are presented on major histocompatibility complex class I (MHC-I) and MHC-II molecules to developing T-cells percolating through the thymic medulla. Also induces self-tolerance through other mechanisms such as the regulation of the mTEC differentiation program. Controls the medullary accumulation of thymic dendritic cells and the development of regulatory T-cell through the regulation of XCL1 expression. Regulates the production of CCR4 and CCR7 ligands in medullary thymic epithelial cells and alters the coordinated maturation and migration of thymocytes. In thimic B-cells, allows the presentation of licensing-dependent endogenous self-anitgen for negative selection. In secondary lymphoid organs, induces functional inactivation of CD4(+) T-cells. Expressed by a distinct bone marrow-derived population, induces self-tolerance through a mechanism that does not require regulatory T-cells and is resitant to innate inflammatory stimuli. The polypeptide is Autoimmune regulator (AIRE) (Homo sapiens (Human)).